The sequence spans 252 residues: 3-deoxy-manno-octulosonate cytidylyltransferase (252 aa).

This sequence belongs to the KdsB family.

The protein localises to the cytoplasm. The enzyme catalyses 3-deoxy-alpha-D-manno-oct-2-ulosonate + CTP = CMP-3-deoxy-beta-D-manno-octulosonate + diphosphate. It participates in nucleotide-sugar biosynthesis; CMP-3-deoxy-D-manno-octulosonate biosynthesis; CMP-3-deoxy-D-manno-octulosonate from 3-deoxy-D-manno-octulosonate and CTP: step 1/1. The protein operates within bacterial outer membrane biogenesis; lipopolysaccharide biosynthesis. Activates KDO (a required 8-carbon sugar) for incorporation into bacterial lipopolysaccharide in Gram-negative bacteria. The sequence is that of 3-deoxy-manno-octulosonate cytidylyltransferase from Rhodospirillum rubrum (strain ATCC 11170 / ATH 1.1.1 / DSM 467 / LMG 4362 / NCIMB 8255 / S1).